The sequence spans 152 residues: Aspartate 1-decarboxylase (152 aa).

The Schiff-base intermediate with substrate; via pyruvic acid role is filled by S24. S24 bears the Pyruvic acid (Ser) mark. Residue T56 coordinates substrate. The Proton donor role is filled by Y57. 72–74 (GAA) lines the substrate pocket.

This sequence belongs to the PanD family. In terms of assembly, heterooctamer of four alpha and four beta subunits. Requires pyruvate as cofactor. Post-translationally, is synthesized initially as an inactive proenzyme, which is activated by self-cleavage at a specific serine bond to produce a beta-subunit with a hydroxyl group at its C-terminus and an alpha-subunit with a pyruvoyl group at its N-terminus.

The protein localises to the cytoplasm. It catalyses the reaction L-aspartate + H(+) = beta-alanine + CO2. It participates in cofactor biosynthesis; (R)-pantothenate biosynthesis; beta-alanine from L-aspartate: step 1/1. Its function is as follows. Catalyzes the pyruvoyl-dependent decarboxylation of aspartate to produce beta-alanine. The polypeptide is Aspartate 1-decarboxylase (Rhodospirillum centenum (strain ATCC 51521 / SW)).